A 426-amino-acid polypeptide reads, in one-letter code: Putative phosphate permease TC_0064 (426 aa).

Transmembrane regions (helical) follow at residues 1-21 (MWWL…NIGA), 37-57 (LTLR…AVVL), 83-103 (VFGM…ASFF), 104-124 (GWPV…GIIL), 140-160 (VSWL…FSFI), 183-203 (AIII…ARVV), 207-227 (VAFR…IWGV), 260-280 (LVVE…MSFA), 309-329 (VLFI…ATWG), 365-385 (FGFP…VGLA), and 399-419 (IVLS…MFFL).

It belongs to the inorganic phosphate transporter (PiT) (TC 2.A.20) family.

It localises to the cell membrane. Its function is as follows. Potential transporter for phosphate. The sequence is that of Putative phosphate permease TC_0064 from Chlamydia muridarum (strain MoPn / Nigg).